The chain runs to 1147 residues: uncharacterized protein (1147 aa).

7 disordered regions span residues 226 to 245, 255 to 297, 431 to 617, 647 to 670, 705 to 945, 1003 to 1032, and 1060 to 1090; these read FGQGQQDLDEGEAGAGGQVD, IQGT…QEKA, SQHP…QSCI, EEMDDHEEGGELRENHPDAQDPVR, HRHR…RRLQ, RQQQEEFRRKCQELQRKKQQEEAERAEAEK, and YQRRKQEAEEKTRWEAEDRRQKEKEAARLAQ. A compositionally biased stretch (basic and acidic residues) spans 268 to 296; that stretch reads WQKDETQTEDTSKDNHHCIHTSKENHQEK. Residues 431-441 are compositionally biased toward basic residues; the sequence is SQHPPKGKAQR. Low complexity predominate over residues 538-549; it reads PAGGALPAAGQA. Residues 584–603 are compositionally biased toward polar residues; the sequence is LNETSPLTQKPENQGAQQSL. Positions 743 to 752 are enriched in polar residues; that stretch reads NQKTSNNISN. The stretch at 743–804 forms a coiled coil; sequence NQKTSNNISN…ESKAEKKSQL (62 aa). Positions 768 to 802 are enriched in basic and acidic residues; it reads TDKSKAPKREKEGKLHEEAEAAVGKSKESKAEKKS. Residues 807 to 819 show a composition bias toward basic residues; that stretch reads KGKKTGAKGKRTR. Positions 870–884 are enriched in polar residues; it reads SQVSIDGRSSPTQTA. Basic and acidic residues predominate over residues 895-945; it reads DRSHEDPSKAFLVKREQEKASRDRLRAERAEMRRLEVERKRREQEEQRRLQ. Residues 907-1112 adopt a coiled-coil conformation; sequence VKREQEKASR…QKDALKKHLH (206 aa).

This is an uncharacterized protein from Bos taurus (Bovine).